The following is a 358-amino-acid chain: MKEKINTLLKHAEDIWRKLCKNEIQAKIEKYEKEINQKNFWNDPKRAQKVIKAQSILKNKIDPWEELINKIKDLSDLCEIAENEKDTNGLEIEFNTLEKQYKDLLTISYFKEELDANNAFLTIHSGAGGTEACDWVAMLYRMYSRYAERKKYKTELIDLLEAEGGIKSVTIEIKGEYAYGLLKSEVGIHRLIRISPFDAAKKRHTSFASVFVDPVIDDKIEITIKPEDIRIDTYRASGAGGQHVNKTSSAVRITHIETGIVTQSQSDRSQHKNKDLAMKVLKSRLYEYYKSKEDEKNKSKQDTKKEISWGNQIRSYVFQPYNLVKDHRTKFENSNTTSVMDGNIDNFIEEYLKWKSLN.

N5-methylglutamine is present on glutamine 242.

It belongs to the prokaryotic/mitochondrial release factor family. Post-translationally, methylated by PrmC. Methylation increases the termination efficiency of RF2.

The protein localises to the cytoplasm. Its function is as follows. Peptide chain release factor 2 directs the termination of translation in response to the peptide chain termination codons UGA and UAA. In Borreliella burgdorferi (strain ATCC 35210 / DSM 4680 / CIP 102532 / B31) (Borrelia burgdorferi), this protein is Peptide chain release factor 2 (prfB).